The sequence spans 598 residues: Elongation factor 4 (598 aa).

In terms of domain architecture, tr-type G spans Lys2–Lys183. Residues Asp14–Thr19 and Asn130–Asp133 each bind GTP.

This sequence belongs to the TRAFAC class translation factor GTPase superfamily. Classic translation factor GTPase family. LepA subfamily.

The protein resides in the cell inner membrane. The catalysed reaction is GTP + H2O = GDP + phosphate + H(+). Functionally, required for accurate and efficient protein synthesis under certain stress conditions. May act as a fidelity factor of the translation reaction, by catalyzing a one-codon backward translocation of tRNAs on improperly translocated ribosomes. Back-translocation proceeds from a post-translocation (POST) complex to a pre-translocation (PRE) complex, thus giving elongation factor G a second chance to translocate the tRNAs correctly. Binds to ribosomes in a GTP-dependent manner. In Flavobacterium psychrophilum (strain ATCC 49511 / DSM 21280 / CIP 103535 / JIP02/86), this protein is Elongation factor 4.